A 127-amino-acid chain; its full sequence is Large-conductance mechanosensitive channel (127 aa).

The next 3 helical transmembrane spans lie at 9–29, 32–52, and 75–95; these read EFAM…GVAF, IVTA…LGGV, and VIDF…INLL.

Belongs to the MscL family. As to quaternary structure, homopentamer.

It localises to the cell inner membrane. In terms of biological role, channel that opens in response to stretch forces in the membrane lipid bilayer. May participate in the regulation of osmotic pressure changes within the cell. The polypeptide is Large-conductance mechanosensitive channel (Legionella pneumophila (strain Corby)).